The following is a 500-amino-acid chain: Chromosomal replication initiator protein DnaA (500 aa).

The segment at 1-81 (MVNASGDPVI…LQALRTVTGE (81 aa)) is domain I, interacts with DnaA modulators. Residues 81 to 155 (ENMFPAFKVV…QQKMNRDPET (75 aa)) are domain II. The segment at 156 to 377 (HLNKNFTFDS…GALTRVTAVA (222 aa)) is domain III, AAA+ region. Residues Gly200, Gly202, Lys203, and Thr204 each contribute to the ATP site. The interval 378–500 (SLSNQPVTRA…TVRLKQSNTN (123 aa)) is domain IV, binds dsDNA.

Belongs to the DnaA family. In terms of assembly, oligomerizes as a right-handed, spiral filament on DNA at oriC.

The protein localises to the cytoplasm. In terms of biological role, plays an essential role in the initiation and regulation of chromosomal replication. ATP-DnaA binds to the origin of replication (oriC) to initiate formation of the DNA replication initiation complex once per cell cycle. Binds the DnaA box (a 9 base pair repeat at the origin) and separates the double-stranded (ds)DNA. Forms a right-handed helical filament on oriC DNA; dsDNA binds to the exterior of the filament while single-stranded (ss)DNA is stabiized in the filament's interior. The ATP-DnaA-oriC complex binds and stabilizes one strand of the AT-rich DNA unwinding element (DUE), permitting loading of DNA polymerase. After initiation quickly degrades to an ADP-DnaA complex that is not apt for DNA replication. Binds acidic phospholipids. This chain is Chromosomal replication initiator protein DnaA, found in Bifidobacterium longum subsp. infantis (strain ATCC 15697 / DSM 20088 / JCM 1222 / NCTC 11817 / S12).